The following is a 593-amino-acid chain: MVSRLKIHSGLRLWEFPDQYVIEPTDGSSASCLDISRLDGSMKLIDQVAECNSLRVPKIRSIFGVVGMLKLLAGSYLVVVTESESVGSFLGHPIYKINSLKFLPCDHSLENPHEEQKKMETDDYSRLLSVAERTTGLYFSYEINLTLTAQRLHDLGDESKLLPLWRQAEPRFLWNNYMLEVLIDNKLDQFLLPVIQGSFHSFQTAIGRDIVDITLIARRCSRRNGTRMWRRGADPDGYVANFVETEQIVRMNGYTSSFVQIRGSMPFMWEQIVDLTYKPKFEIVQPEEAARIAERHFLDLRKKYGSVLAVDLVNKHGGEGRLSERFAGAMQHITGDDVRYLHFDFHHICGHIHFERLAILYEQMEDFLEKNGYFLLNEKGEKMKEQLGIVRTNCIDCLDRTNVTQSMIGRKLLELQLKRIGVFGAEETIRSHQNFDECYKILWANHGDDISIQYSGTPALKGDFVRYGQRTIQGVLQDGWNALARYYLNNFADGTKQDAIDLVQGHYIVAVSRDMAPVPRKRGLEAVANFPVALTVILISFWFATMSVKQVGSGYKHLLFSLVWAGISVAVAALVRANGRIFCNRPSLHKPRS.

Positions 128 to 456 (LSVAERTTGL…GDDISIQYSG (329 aa)) constitute an SAC domain. The Phosphatase catalytic core signature appears at 391–402 (RTNCIDCLDRTN). The next 2 membrane-spanning stretches (helical) occupy residues 526 to 546 (AVANFPVALTVILISFWFATM) and 555 to 575 (YKHLLFSLVWAGISVAVAALV).

As to expression, predominantly expressed in flowers.

It localises to the endoplasmic reticulum membrane. Its function is as follows. Phosphoinositide phosphatase that hydrolyzes PtdIns(3)P and PtdIns(4)P. Involved in priming for different defense responses. This is Phosphoinositide phosphatase SAC6 (SAC6) from Arabidopsis thaliana (Mouse-ear cress).